The following is a 347-amino-acid chain: Very-long-chain 3-oxoacyl-CoA reductase (347 aa).

The helical transmembrane segment at Leu-20 to Leu-40 threads the bilayer. 6 residues coordinate NADP(+): Asp-120, Asn-147, Tyr-223, Lys-227, Val-256, and Ser-258. Residue Tyr-223 is the Proton donor of the active site. Lys-227 acts as the Lowers pKa of active site Tyr in catalysis.

It belongs to the short-chain dehydrogenases/reductases (SDR) family. As to quaternary structure, interacts with the fatty acid elongation system components ELO3 and TSC13.

It localises to the endoplasmic reticulum membrane. It carries out the reaction a very-long-chain (3R)-3-hydroxyacyl-CoA + NADP(+) = a very-long-chain 3-oxoacyl-CoA + NADPH + H(+). The catalysed reaction is 3-oxooctadecanoyl-CoA + NADPH + H(+) = (3R)-hydroxyoctadecanoyl-CoA + NADP(+). It catalyses the reaction 3-oxoeicosanoyl-CoA + NADPH + H(+) = (3R)-hydroxyeicosanoyl-CoA + NADP(+). The enzyme catalyses 3-oxodocosanoyl-CoA + NADPH + H(+) = (3R)-hydroxydocosanoyl-CoA + NADP(+). It carries out the reaction 3-oxotetracosanoyl-CoA + NADPH + H(+) = (3R)-hydroxytetracosanoyl-CoA + NADP(+). The catalysed reaction is 3-oxohexacosanoyl-CoA + NADPH + H(+) = (3R)-hydroxyhexacosanoyl-CoA + NADP(+). The protein operates within lipid metabolism; fatty acid biosynthesis. In terms of biological role, component of the microsomal membrane bound fatty acid elongation system, which produces the 26-carbon very long-chain fatty acids (VLCFA) from palmitate. Catalyzes the reduction of the 3-ketoacyl-CoA intermediate that is formed in each cycle of fatty acid elongation. VLCFAs serve as precursors for ceramide and sphingolipids. The sequence is that of Very-long-chain 3-oxoacyl-CoA reductase (IFA38) from Saccharomyces cerevisiae (strain ATCC 204508 / S288c) (Baker's yeast).